Here is a 435-residue protein sequence, read N- to C-terminus: Glutamyl-tRNA reductase (435 aa).

Substrate-binding positions include 49 to 52, Ser-118, 123 to 125, and Gln-129; these read TCNR and EPQ. Cys-50 functions as the Nucleophile in the catalytic mechanism. 203–208 provides a ligand contact to NADP(+); the sequence is GAGETI.

It belongs to the glutamyl-tRNA reductase family. In terms of assembly, homodimer.

The enzyme catalyses (S)-4-amino-5-oxopentanoate + tRNA(Glu) + NADP(+) = L-glutamyl-tRNA(Glu) + NADPH + H(+). Its pathway is porphyrin-containing compound metabolism; protoporphyrin-IX biosynthesis; 5-aminolevulinate from L-glutamyl-tRNA(Glu): step 1/2. In terms of biological role, catalyzes the NADPH-dependent reduction of glutamyl-tRNA(Glu) to glutamate 1-semialdehyde (GSA). This chain is Glutamyl-tRNA reductase, found in Glaesserella parasuis serovar 5 (strain SH0165) (Haemophilus parasuis).